Reading from the N-terminus, the 314-residue chain is tRNA pseudouridine synthase B (314 aa).

Substrate is bound at residue His-43. Catalysis depends on Asp-48, which acts as the Nucleophile. Positions 76, 179, and 200 each coordinate substrate.

This sequence belongs to the pseudouridine synthase TruB family. Type 1 subfamily.

It catalyses the reaction uridine(55) in tRNA = pseudouridine(55) in tRNA. Functionally, responsible for synthesis of pseudouridine from uracil-55 in the psi GC loop of transfer RNAs. This is tRNA pseudouridine synthase B from Shigella dysenteriae serotype 1 (strain Sd197).